An 80-amino-acid chain; its full sequence is Putative membrane protein insertion efficiency factor (80 aa).

This sequence belongs to the UPF0161 family.

Its subcellular location is the cell membrane. In terms of biological role, could be involved in insertion of integral membrane proteins into the membrane. In Limosilactobacillus fermentum (strain NBRC 3956 / LMG 18251) (Lactobacillus fermentum), this protein is Putative membrane protein insertion efficiency factor.